The primary structure comprises 477 residues: MAGKTLYDKLWEAHEVKRRDDGSSLIYIDRHIIHEVTSPQAFEGLRLANRKPWRIDTNIATPDHNVPTTPERKGGIEAIVDQVSRLQVQTLDENCDEYGIVEFKMNDERQGIVHVISPEQGATLPGMTVVCGDSHTSTHGAFGALAHGIGTSEVEHVLATQCLVAKKMKNMLVRVEGQLPAGVTAKDIVLAVIGKIGTAGGNGHAMEFAGSAIRELSMEGRMTICNMSIEAGARVGLVATDATTVAYVEGRPYAPKGEQWKQAVESWKDLVSDEDAVFDTVVELDASQIKPQVSWGTSPEMVLAVDQRVPDPAAEADLVKRGSIERALKYMGLTANQAITDIKLDRVFIGSCTNSRIEDLRAAAEIAKGRKVAASVKQAIVVPGSGLVKAQAEREGLDKIFLEAGFEWREPGCSMCLAMNPDRLESGEHCASTSNRNFEGRQGAGGRTHLVSPAMAAAAAVAGHFIDVRELIQGSAA.

Positions 352, 413, and 416 each coordinate [4Fe-4S] cluster.

The protein belongs to the aconitase/IPM isomerase family. LeuC type 1 subfamily. In terms of assembly, heterodimer of LeuC and LeuD. The cofactor is [4Fe-4S] cluster.

It carries out the reaction (2R,3S)-3-isopropylmalate = (2S)-2-isopropylmalate. Its pathway is amino-acid biosynthesis; L-leucine biosynthesis; L-leucine from 3-methyl-2-oxobutanoate: step 2/4. Functionally, catalyzes the isomerization between 2-isopropylmalate and 3-isopropylmalate, via the formation of 2-isopropylmaleate. The chain is 3-isopropylmalate dehydratase large subunit from Pseudomonas putida (strain GB-1).